The chain runs to 188 residues: UPF0301 protein ABO_0112 (188 aa).

The protein belongs to the UPF0301 (AlgH) family.

The chain is UPF0301 protein ABO_0112 from Alcanivorax borkumensis (strain ATCC 700651 / DSM 11573 / NCIMB 13689 / SK2).